We begin with the raw amino-acid sequence, 121 residues long: Large ribosomal subunit protein uL18 (121 aa).

Belongs to the universal ribosomal protein uL18 family. In terms of assembly, part of the 50S ribosomal subunit; part of the 5S rRNA/L5/L18/L25 subcomplex. Contacts the 5S and 23S rRNAs.

This is one of the proteins that bind and probably mediate the attachment of the 5S RNA into the large ribosomal subunit, where it forms part of the central protuberance. This is Large ribosomal subunit protein uL18 from Burkholderia mallei (strain NCTC 10247).